A 168-amino-acid polypeptide reads, in one-letter code: Chorismate pyruvate-lyase (168 aa).

M36, R78, L116, and E157 together coordinate substrate.

This sequence belongs to the UbiC family. In terms of assembly, monomer.

It localises to the cytoplasm. It carries out the reaction chorismate = 4-hydroxybenzoate + pyruvate. Its pathway is cofactor biosynthesis; ubiquinone biosynthesis. In terms of biological role, removes the pyruvyl group from chorismate, with concomitant aromatization of the ring, to provide 4-hydroxybenzoate (4HB) for the ubiquinone pathway. This is Chorismate pyruvate-lyase from Yersinia enterocolitica serotype O:8 / biotype 1B (strain NCTC 13174 / 8081).